A 208-amino-acid chain; its full sequence is Uracil phosphoribosyltransferase (208 aa).

5-phospho-alpha-D-ribose 1-diphosphate contacts are provided by residues Arg78, Arg103, and Asp130–Ser138. Residues Ile193 and Gly198 to Ala200 each bind uracil. Asp199 contributes to the 5-phospho-alpha-D-ribose 1-diphosphate binding site.

Belongs to the UPRTase family. Mg(2+) is required as a cofactor.

The catalysed reaction is UMP + diphosphate = 5-phospho-alpha-D-ribose 1-diphosphate + uracil. The protein operates within pyrimidine metabolism; UMP biosynthesis via salvage pathway; UMP from uracil: step 1/1. Its activity is regulated as follows. Allosterically activated by GTP. Catalyzes the conversion of uracil and 5-phospho-alpha-D-ribose 1-diphosphate (PRPP) to UMP and diphosphate. In Proteus mirabilis (strain HI4320), this protein is Uracil phosphoribosyltransferase.